The sequence spans 143 residues: D-aminoacyl-tRNA deacylase (143 aa).

Residues 135–136 (GP) carry the Gly-cisPro motif, important for rejection of L-amino acids motif.

Belongs to the DTD family. As to quaternary structure, homodimer.

It localises to the cytoplasm. The catalysed reaction is glycyl-tRNA(Ala) + H2O = tRNA(Ala) + glycine + H(+). The enzyme catalyses a D-aminoacyl-tRNA + H2O = a tRNA + a D-alpha-amino acid + H(+). Its function is as follows. An aminoacyl-tRNA editing enzyme that deacylates mischarged D-aminoacyl-tRNAs. Also deacylates mischarged glycyl-tRNA(Ala), protecting cells against glycine mischarging by AlaRS. Acts via tRNA-based rather than protein-based catalysis; rejects L-amino acids rather than detecting D-amino acids in the active site. By recycling D-aminoacyl-tRNA to D-amino acids and free tRNA molecules, this enzyme counteracts the toxicity associated with the formation of D-aminoacyl-tRNA entities in vivo and helps enforce protein L-homochirality. The polypeptide is D-aminoacyl-tRNA deacylase (Mycolicibacterium gilvum (strain PYR-GCK) (Mycobacterium gilvum (strain PYR-GCK))).